We begin with the raw amino-acid sequence, 207 residues long: Serotonin N-acetyltransferase (207 aa).

A Phosphothreonine; by PKA modification is found at T31. The region spanning 35 to 194 is the N-acetyltransferase domain; that stretch reads SEFRCLTPQD…SLTFMELQCS (160 aa). Position 124 (L124) interacts with substrate. Acetyl-CoA contacts are provided by residues 124–126 and 132–137; these read LAV and QQGKGS. M159 is a substrate binding site. 168 to 170 provides a ligand contact to acetyl-CoA; the sequence is YEK. A Phosphoserine modification is found at S205.

The protein belongs to the acetyltransferase family. AANAT subfamily. Monomer. Interacts with several 14-3-3 proteins, including YWHAB, YWHAE, YWHAG and YWHAZ, preferentially when phosphorylated at Thr-31. Phosphorylation on Ser-205 also allows binding to YWHAZ, but with lower affinity. The interaction with YWHAZ considerably increases affinity for arylalkylamines and acetyl-CoA and protects the enzyme from dephosphorylation and proteasomal degradation. It may also prevent thiol-dependent inactivation. In terms of processing, cAMP-dependent phosphorylation on both N-terminal Thr-31 and C-terminal Ser-205 regulates AANAT activity by promoting interaction with 14-3-3 proteins. Highly expressed in pineal gland and retina. Also detected in heart and intestine.

It is found in the cytoplasm. The catalysed reaction is a 2-arylethylamine + acetyl-CoA = an N-acetyl-2-arylethylamine + CoA + H(+). Its pathway is aromatic compound metabolism; melatonin biosynthesis; melatonin from serotonin: step 1/2. Its function is as follows. Controls the night/day rhythm of melatonin production in the pineal gland. Catalyzes the N-acetylation of serotonin into N-acetylserotonin, the penultimate step in the synthesis of melatonin. In Mesocricetus auratus (Golden hamster), this protein is Serotonin N-acetyltransferase (AANAT).